The following is a 523-amino-acid chain: Tryptophan 6-halogenase SttH (523 aa).

6 residues coordinate FAD: Gly14, Ser40, Ile43, Val46, Val48, and Ala51. Residue Lys79 is part of the active site. Pro97 is an L-tryptophan binding site. 2 residues coordinate FAD: Val203 and Leu354. Chloride is bound by residues Thr365 and Gly366. Residue Ile367 coordinates FAD. L-tryptophan-binding residues include Tyr456 and Tyr457.

It belongs to the flavin-dependent halogenase family. Bacterial tryptophan halogenase subfamily. Homodimer.

It carries out the reaction L-tryptophan + FADH2 + chloride + O2 = 6-chloro-L-tryptophan + FAD + 2 H2O. The catalysed reaction is D-tryptophan + FADH2 + chloride + O2 = 6-chloro-D-tryptophan + FAD + 2 H2O. Catalyzes the chlorination of tryptophan (Trp) at C6 position to yield 6-chloro-tryptophan. Accepts both L and D-Trp as the substrates. The enzyme also uses bromide to yield 6-bromo-Trp. In vitro, can also catalyze the halogenation of 3-indolepropionic acid, N-methyltryptophan and non-indolic aromatic substrates such as kynurenine, anthranilamide and N-phenylanthranilic acid. This is Tryptophan 6-halogenase SttH from Streptomyces toxytricini (Actinomyces toxytricini).